A 504-amino-acid polypeptide reads, in one-letter code: ATP synthase subunit alpha (504 aa).

169–176 (GDRQTGKT) contacts ATP.

The protein belongs to the ATPase alpha/beta chains family. F-type ATPases have 2 components, CF(1) - the catalytic core - and CF(0) - the membrane proton channel. CF(1) has five subunits: alpha(3), beta(3), gamma(1), delta(1), epsilon(1). CF(0) has three main subunits: a(1), b(2) and c(9-12). The alpha and beta chains form an alternating ring which encloses part of the gamma chain. CF(1) is attached to CF(0) by a central stalk formed by the gamma and epsilon chains, while a peripheral stalk is formed by the delta and b chains.

The protein localises to the cell membrane. It catalyses the reaction ATP + H2O + 4 H(+)(in) = ADP + phosphate + 5 H(+)(out). In terms of biological role, produces ATP from ADP in the presence of a proton gradient across the membrane. The alpha chain is a regulatory subunit. In Clostridium kluyveri (strain ATCC 8527 / DSM 555 / NBRC 12016 / NCIMB 10680 / K1), this protein is ATP synthase subunit alpha.